The sequence spans 561 residues: DNA ligase (561 aa).

Residue E253 participates in ATP binding. Catalysis depends on K255, which acts as the N6-AMP-lysine intermediate. Residues R260, R275, E304, F344, R421, and K427 each contribute to the ATP site.

Belongs to the ATP-dependent DNA ligase family. Mg(2+) serves as cofactor.

The catalysed reaction is ATP + (deoxyribonucleotide)n-3'-hydroxyl + 5'-phospho-(deoxyribonucleotide)m = (deoxyribonucleotide)n+m + AMP + diphosphate.. In terms of biological role, DNA ligase that seals nicks in double-stranded DNA during DNA replication, DNA recombination and DNA repair. The protein is DNA ligase of Halobacterium salinarum (strain ATCC 29341 / DSM 671 / R1).